The primary structure comprises 954 residues: Bifunctional glutamine synthetase adenylyltransferase/adenylyl-removing enzyme (954 aa).

Residues 1-452 (MAVQKDSNKS…HFKATVGGEE (452 aa)) form an adenylyl removase region. The adenylyl transferase stretch occupies residues 458-954 (EHWTAQLWNV…ILAIYQAILE (497 aa)).

The protein belongs to the GlnE family. The cofactor is Mg(2+).

The enzyme catalyses [glutamine synthetase]-O(4)-(5'-adenylyl)-L-tyrosine + phosphate = [glutamine synthetase]-L-tyrosine + ADP. It carries out the reaction [glutamine synthetase]-L-tyrosine + ATP = [glutamine synthetase]-O(4)-(5'-adenylyl)-L-tyrosine + diphosphate. Its function is as follows. Involved in the regulation of glutamine synthetase GlnA, a key enzyme in the process to assimilate ammonia. When cellular nitrogen levels are high, the C-terminal adenylyl transferase (AT) inactivates GlnA by covalent transfer of an adenylyl group from ATP to specific tyrosine residue of GlnA, thus reducing its activity. Conversely, when nitrogen levels are low, the N-terminal adenylyl removase (AR) activates GlnA by removing the adenylyl group by phosphorolysis, increasing its activity. The regulatory region of GlnE binds the signal transduction protein PII (GlnB) which indicates the nitrogen status of the cell. This chain is Bifunctional glutamine synthetase adenylyltransferase/adenylyl-removing enzyme, found in Shewanella oneidensis (strain ATCC 700550 / JCM 31522 / CIP 106686 / LMG 19005 / NCIMB 14063 / MR-1).